Here is a 469-residue protein sequence, read N- to C-terminus: Uronate isomerase (469 aa).

It belongs to the metallo-dependent hydrolases superfamily. Uronate isomerase family.

The catalysed reaction is D-glucuronate = D-fructuronate. The enzyme catalyses aldehydo-D-galacturonate = keto-D-tagaturonate. It participates in carbohydrate metabolism; pentose and glucuronate interconversion. This chain is Uronate isomerase, found in Pectobacterium carotovorum subsp. carotovorum (strain PC1).